The primary structure comprises 496 residues: 1-aminocyclopropane-1-carboxylate synthase 4 (496 aa).

Lys300 carries the post-translational modification N6-(pyridoxal phosphate)lysine.

This sequence belongs to the class-I pyridoxal-phosphate-dependent aminotransferase family. Requires pyridoxal 5'-phosphate as cofactor. In terms of tissue distribution, expressed in leaves. Expressed in shoots and leaf blades. Expressed at low levels in leaf sheaths.

It catalyses the reaction S-adenosyl-L-methionine = 1-aminocyclopropane-1-carboxylate + S-methyl-5'-thioadenosine + H(+). The protein operates within alkene biosynthesis; ethylene biosynthesis via S-adenosyl-L-methionine; ethylene from S-adenosyl-L-methionine: step 1/2. In terms of biological role, catalyzes the formation of 1-aminocyclopropane-1-carboxylate, a direct precursor of ethylene in higher plants. This chain is 1-aminocyclopropane-1-carboxylate synthase 4, found in Oryza sativa subsp. japonica (Rice).